The chain runs to 132 residues: L-ectoine synthase (132 aa).

Belongs to the ectoine synthase family.

The catalysed reaction is (2S)-4-acetamido-2-aminobutanoate = L-ectoine + H2O. Its pathway is amine and polyamine biosynthesis; ectoine biosynthesis; L-ectoine from L-aspartate 4-semialdehyde: step 3/3. In terms of biological role, catalyzes the circularization of gamma-N-acetyl-alpha,gamma-diaminobutyric acid (ADABA) to ectoine (1,4,5,6-tetrahydro-2-methyl-4-pyrimidine carboxylic acid), which is an excellent osmoprotectant. The polypeptide is L-ectoine synthase (Rhodococcus jostii (strain RHA1)).